Here is a 425-residue protein sequence, read N- to C-terminus: Elongation factor 1-alpha (425 aa).

The 217-residue stretch at 5 to 221 (KPHMNLAVIG…DTFKEPSKPT (217 aa)) folds into the tr-type G domain. The tract at residues 14–21 (GHIDHGKS) is G1. Position 14–21 (14–21 (GHIDHGKS)) interacts with GTP. Ser-21 contributes to the Mg(2+) binding site. Residues 70–74 (GITID) form a G2 region. The segment at 91 to 94 (DCPG) is G3. Residues 91–95 (DCPGH) and 146–149 (NKMD) each bind GTP. The G4 stretch occupies residues 146-149 (NKMD). The segment at 185–187 (SSL) is G5.

It belongs to the TRAFAC class translation factor GTPase superfamily. Classic translation factor GTPase family. EF-Tu/EF-1A subfamily.

It localises to the cytoplasm. The enzyme catalyses GTP + H2O = GDP + phosphate + H(+). Its function is as follows. GTP hydrolase that promotes the GTP-dependent binding of aminoacyl-tRNA to the A-site of ribosomes during protein biosynthesis. The protein is Elongation factor 1-alpha of Methanoregula boonei (strain DSM 21154 / JCM 14090 / 6A8).